The primary structure comprises 366 residues: Phospho-N-acetylmuramoyl-pentapeptide-transferase (366 aa).

Helical transmembrane passes span 27 to 47 (AALFTSALIVFLFGPTIINSL), 71 to 91 (TPTMGGLMILAGIVGASLLWA), 93 to 113 (LSNVYVVATLLVTLGFGAIGF), 138 to 158 (FVIAGIAVYFMMRTALASGIA), 174 to 194 (FMINIGIMFVVFGGFVIVGAG), 205 to 225 (GLAIVPVMIAAASFGVIAYLA), 245 to 265 (LAVVLGAVIGAGLGFLWFNAP), 268 to 288 (AIFMGDTGSLALGGTIGTVAV), 294 to 314 (IVMAIIGGLFVIETLSVIIQV), and 343 to 363 (QVVIRFWIVAVGLAMLGLSTL).

It belongs to the glycosyltransferase 4 family. MraY subfamily. Mg(2+) serves as cofactor.

It localises to the cell inner membrane. The catalysed reaction is UDP-N-acetyl-alpha-D-muramoyl-L-alanyl-gamma-D-glutamyl-meso-2,6-diaminopimeloyl-D-alanyl-D-alanine + di-trans,octa-cis-undecaprenyl phosphate = di-trans,octa-cis-undecaprenyl diphospho-N-acetyl-alpha-D-muramoyl-L-alanyl-D-glutamyl-meso-2,6-diaminopimeloyl-D-alanyl-D-alanine + UMP. It participates in cell wall biogenesis; peptidoglycan biosynthesis. In terms of biological role, catalyzes the initial step of the lipid cycle reactions in the biosynthesis of the cell wall peptidoglycan: transfers peptidoglycan precursor phospho-MurNAc-pentapeptide from UDP-MurNAc-pentapeptide onto the lipid carrier undecaprenyl phosphate, yielding undecaprenyl-pyrophosphoryl-MurNAc-pentapeptide, known as lipid I. This is Phospho-N-acetylmuramoyl-pentapeptide-transferase from Rhizobium johnstonii (strain DSM 114642 / LMG 32736 / 3841) (Rhizobium leguminosarum bv. viciae).